A 392-amino-acid polypeptide reads, in one-letter code: Alanine--glyoxylate aminotransferase (392 aa).

Residue Thr9 is modified to Phosphothreonine. Lys209 bears the N6-(pyridoxal phosphate)lysine mark. At Lys225 the chain carries N6-acetyllysine; alternate. The residue at position 225 (Lys225) is an N6-succinyllysine; alternate. Residues Lys234 and Lys312 each carry the N6-acetyllysine modification. Arg360 contacts substrate.

It belongs to the class-V pyridoxal-phosphate-dependent aminotransferase family. Homodimer. Requires pyridoxal 5'-phosphate as cofactor. Liver.

It localises to the peroxisome. It carries out the reaction L-serine + pyruvate = 3-hydroxypyruvate + L-alanine. The enzyme catalyses glyoxylate + L-alanine = glycine + pyruvate. With respect to regulation, alanine--glyoxylate aminotransferase activity is inhibited by 1 mM (aminooxy)acetic acid by 97.5%. Functionally, peroxisomal aminotransferase that catalyzes the transamination of glyoxylate to glycine and contributes to the glyoxylate detoxification. Also catalyzes the transamination between L-serine and pyruvate and contributes to gluconeogenesis from the L-serine metabolism. The chain is Alanine--glyoxylate aminotransferase from Homo sapiens (Human).